Consider the following 468-residue polypeptide: Beta-amylase (468 aa).

A signal peptide spans 1 to 36 (MTLYRSLWKKGCMLLLSLVLSLTAFIGSPSNTASAA). Substrate is bound at residue aspartate 76. Ca(2+)-binding residues include glutamate 83 and aspartate 87. Substrate contacts are provided by histidine 116 and aspartate 124. A disulfide bridge connects residues cysteine 118 and cysteine 126. Glutamate 170 lines the Ca(2+) pocket. Catalysis depends on glutamate 198, which acts as the Proton donor. Residues lysine 314, histidine 319, and threonine 357 each coordinate substrate. The active-site Proton acceptor is glutamate 394. Substrate is bound by residues 395–396 (NA) and arginine 423.

This sequence belongs to the glycosyl hydrolase 14 family. Ca(2+) is required as a cofactor.

The enzyme catalyses Hydrolysis of (1-&gt;4)-alpha-D-glucosidic linkages in polysaccharides so as to remove successive maltose units from the non-reducing ends of the chains.. In Cytobacillus firmus (Bacillus firmus), this protein is Beta-amylase.